Reading from the N-terminus, the 105-residue chain is UPF0145 protein Sala_0338 (105 aa).

This sequence belongs to the UPF0145 family.

This Sphingopyxis alaskensis (strain DSM 13593 / LMG 18877 / RB2256) (Sphingomonas alaskensis) protein is UPF0145 protein Sala_0338.